Here is an 89-residue protein sequence, read N- to C-terminus: Small ribosomal subunit protein uS15 (89 aa).

The protein belongs to the universal ribosomal protein uS15 family. Part of the 30S ribosomal subunit. Forms a bridge to the 50S subunit in the 70S ribosome, contacting the 23S rRNA.

Its function is as follows. One of the primary rRNA binding proteins, it binds directly to 16S rRNA where it helps nucleate assembly of the platform of the 30S subunit by binding and bridging several RNA helices of the 16S rRNA. Forms an intersubunit bridge (bridge B4) with the 23S rRNA of the 50S subunit in the ribosome. The protein is Small ribosomal subunit protein uS15 of Escherichia coli O157:H7.